A 193-amino-acid polypeptide reads, in one-letter code: GDP-mannose pyrophosphatase (193 aa).

GDP-alpha-D-mannose contacts are provided by residues 38–40 (IRE), R67, and 85–87 (AGL). Residues 43–180 (DRGDGATILL…RIKDGKTIML (138 aa)) form the Nudix hydrolase domain. Mg(2+) is bound by residues A85, E100, and E104. Positions 86–106 (GLLDDYSPEECIRNEAIEETG) match the Nudix box motif. GDP-alpha-D-mannose contacts are provided by residues E104, E127, 150–151 (DE), and K176. E151 serves as a coordination point for Mg(2+).

The protein belongs to the Nudix hydrolase family. NudK subfamily. In terms of assembly, homodimer. The cofactor is Mg(2+).

The catalysed reaction is GDP-alpha-D-mannose + H2O = alpha-D-mannose 1-phosphate + GMP + 2 H(+). In terms of biological role, nucleoside diphosphate sugar hydrolase that hydrolyzes GDP-mannose as its preferred substrate, yielding GMP and mannose-1-phosphate. The polypeptide is GDP-mannose pyrophosphatase (nudK) (Pectobacterium atrosepticum (strain SCRI 1043 / ATCC BAA-672) (Erwinia carotovora subsp. atroseptica)).